The primary structure comprises 405 residues: MIIDQRALGFGSGERAVFASDPWTTRGRLFPEAGSLTRSEFQRDRDRIVHTTAFRRLKHKTQVFISPDGDHYRTRLTHTIEVAQIARALARALKLDEDLAEGVALVHDFGHTPFGHTGEDALDAVLLPYGGFDHNAQSLRIVTKLERRYAEYDGINLTWETLEGLVKHNGPLVNAKGEGIKGPVPLPILEYCVLQDLEIGSYASLEAQVAAIADDIAYNTHDIDDGLRAGYLTFEMLEEVPFLSKLMAEVRGKYPVLDKERFANEIMRRQITHMVEDVIGVAQQNLARLKPQSAADIRAADFTVATFSPEMAETDRQIKKLLFGHIYRHPEIMRIRAGATQIVTDLFHRYMETPAEMQSHYWVDSISGMSVAAKARHVGDYLAGMTDSYALRAHQRLFDHTPDLR.

Residues 75 to 219 (RLTHTIEVAQ…AAIADDIAYN (145 aa)) form the HD domain.

This sequence belongs to the dGTPase family. Type 2 subfamily.

The chain is Deoxyguanosinetriphosphate triphosphohydrolase-like protein from Agrobacterium fabrum (strain C58 / ATCC 33970) (Agrobacterium tumefaciens (strain C58)).